Consider the following 739-residue polypeptide: MTANRPALPTRDKAVSDLSATEASDEHAALSQEIASHDARYYQEDAPVISDADYDRLRRRYEDIEARFPALKNDDSLSRKVGAAPSAKFAKVVHQVPMLSLQNAFSDEEVEEFVARVRRFLNLAESAELAFTAEPKIDGLSCSLRYEGGVLVRAATRGDGTQGEDVTANVRTIAEIPHRLTGAGVPDIIDIRGEVYMGKADFLALNARQEEAGKPVFANPRNAAAGSLRQLDPEITRSRPLRFFAYAWGQAEPGPPGASQHEVVDAFRRFGLPTNPLTIRVTDAAGLLAHYRKIGAERASLGYDIDGVVYKVDSLALQERLGFVSRSPRWAIAHKFAAEQATTVIEAIEIQVGRTGALTPVAKLTPVTVGGVVVSNATLHNEDYIRAIGGNGEEIREGIDIRVGDTVVVQRAGDVIPQVVSVVLDKRPAGATAYQFPHHCPVCNSQAVREVDPKTGKQDAVRRCTGGLICPAQAVERLRHFVSRNAFDIEGLGEKQAHAFYEWKLIAEPADIFRLQARNEQSLSKLENREGWGRTSAQNLFAAIEARRTIALDRFIFALGIRHVGETNAKRLARHYGSVEALRDAAIGAEMPTEMEEASEETPPTRRRKPQGNEVWQEMTDIDGIGAVVAEAVVEFFREPHNRQVVEELLKEVTPQPLEAVASTSPVSGKTVVFTGSLERMTRDEAKAMAERLGAKVAGSVSGKTDLLVAGPGAGSKLEKARSLGVKTITEDEWFDLVG.

Residues 1 to 29 form a disordered region; that stretch reads MTANRPALPTRDKAVSDLSATEASDEHAA. NAD(+)-binding positions include 51 to 55, 100 to 101, and glutamate 134; these read DADYD and SL. The active-site N6-AMP-lysine intermediate is lysine 136. NAD(+) is bound by residues arginine 157, glutamate 194, lysine 311, and lysine 335. Positions 440, 443, 464, and 470 each coordinate Zn(2+). Residues 592–612 form a disordered region; it reads PTEMEEASEETPPTRRRKPQG. The region spanning 662 to 739 is the BRCT domain; sequence ASTSPVSGKT…TEDEWFDLVG (78 aa).

Belongs to the NAD-dependent DNA ligase family. LigA subfamily. Mg(2+) is required as a cofactor. It depends on Mn(2+) as a cofactor.

It carries out the reaction NAD(+) + (deoxyribonucleotide)n-3'-hydroxyl + 5'-phospho-(deoxyribonucleotide)m = (deoxyribonucleotide)n+m + AMP + beta-nicotinamide D-nucleotide.. Functionally, DNA ligase that catalyzes the formation of phosphodiester linkages between 5'-phosphoryl and 3'-hydroxyl groups in double-stranded DNA using NAD as a coenzyme and as the energy source for the reaction. It is essential for DNA replication and repair of damaged DNA. The chain is DNA ligase from Azorhizobium caulinodans (strain ATCC 43989 / DSM 5975 / JCM 20966 / LMG 6465 / NBRC 14845 / NCIMB 13405 / ORS 571).